Here is a 374-residue protein sequence, read N- to C-terminus: Amino acid binding protein (374 aa).

The signal sequence occupies residues 1-27 (MSKKLFRKGILALAVSSVMGLSTHALA).

It belongs to the leucine-binding protein family.

It is found in the periplasm. In terms of biological role, binds primarily proteinogenic amino acids. The sequence is that of Amino acid binding protein from Pseudomonas aeruginosa (strain ATCC 15692 / DSM 22644 / CIP 104116 / JCM 14847 / LMG 12228 / 1C / PRS 101 / PAO1).